Here is a 210-residue protein sequence, read N- to C-terminus: Cell division protein SepF (210 aa).

Composition is skewed to low complexity over residues 36 to 47 and 59 to 69; these read QQQQTPAAVPTQ and RASATTATTAS. Disordered stretches follow at residues 36-69 and 182-210; these read QQQQ…TTAS and NEMS…QMIQ.

This sequence belongs to the SepF family. In terms of assembly, homodimer. Interacts with FtsZ.

The protein localises to the cytoplasm. Functionally, cell division protein that is part of the divisome complex and is recruited early to the Z-ring. Probably stimulates Z-ring formation, perhaps through the cross-linking of FtsZ protofilaments. Its function overlaps with FtsA. This is Cell division protein SepF from Trichodesmium erythraeum (strain IMS101).